A 271-amino-acid chain; its full sequence is 3-methyl-2-oxobutanoate hydroxymethyltransferase (271 aa).

Aspartate 44 and aspartate 83 together coordinate Mg(2+). Residues 44–45 (DS), aspartate 83, and lysine 112 contribute to the 3-methyl-2-oxobutanoate site. Position 114 (glutamate 114) interacts with Mg(2+). The Proton acceptor role is filled by glutamate 181.

The protein belongs to the PanB family. Homodecamer; pentamer of dimers. Mg(2+) is required as a cofactor.

It localises to the cytoplasm. The enzyme catalyses 3-methyl-2-oxobutanoate + (6R)-5,10-methylene-5,6,7,8-tetrahydrofolate + H2O = 2-dehydropantoate + (6S)-5,6,7,8-tetrahydrofolate. It functions in the pathway cofactor biosynthesis; coenzyme A biosynthesis. Its function is as follows. Catalyzes the reversible reaction in which hydroxymethyl group from 5,10-methylenetetrahydrofolate is transferred onto alpha-ketoisovalerate to form ketopantoate. The chain is 3-methyl-2-oxobutanoate hydroxymethyltransferase from Staphylothermus marinus (strain ATCC 43588 / DSM 3639 / JCM 9404 / F1).